The chain runs to 147 residues: D-aminoacyl-tRNA deacylase (147 aa).

The Gly-cisPro motif, important for rejection of L-amino acids signature appears at 137-138 (GP).

It belongs to the DTD family. Homodimer.

It localises to the cytoplasm. The enzyme catalyses glycyl-tRNA(Ala) + H2O = tRNA(Ala) + glycine + H(+). It catalyses the reaction a D-aminoacyl-tRNA + H2O = a tRNA + a D-alpha-amino acid + H(+). Its function is as follows. An aminoacyl-tRNA editing enzyme that deacylates mischarged D-aminoacyl-tRNAs. Also deacylates mischarged glycyl-tRNA(Ala), protecting cells against glycine mischarging by AlaRS. Acts via tRNA-based rather than protein-based catalysis; rejects L-amino acids rather than detecting D-amino acids in the active site. By recycling D-aminoacyl-tRNA to D-amino acids and free tRNA molecules, this enzyme counteracts the toxicity associated with the formation of D-aminoacyl-tRNA entities in vivo and helps enforce protein L-homochirality. The chain is D-aminoacyl-tRNA deacylase from Exiguobacterium sp. (strain ATCC BAA-1283 / AT1b).